The primary structure comprises 431 residues: Cleavage stimulation factor subunit 1 (431 aa).

The interval 14 to 35 (LYKLIISQLLYDGYISIANGLI) is hydrophobic. WD repeat units lie at residues 106-145 (SHKG…AKSA), 171-210 (DHVD…AKRA), 215-254 (QEAE…CFVS), 260-301 (QHTD…TTFE), 303-343 (AHDG…TLVR), and 395-430 (GHNN…RSTT).

As to quaternary structure, homodimer. The CSTF complex is composed of CSTF1 (50 kDa subunit), CSTF2 (64 kDa subunit) and CSTF3 (77 kDa subunit). Interacts (via repeats WD) directly with CSTF3. Interacts (via repeat WD6) with BARD1. Interacts with ERCC6. The N-terminus is blocked.

It is found in the nucleus. In terms of biological role, one of the multiple factors required for polyadenylation and 3'-end cleavage of mammalian pre-mRNAs. May be responsible for the interaction of CSTF with other factors to form a stable complex on the pre-mRNA. In Homo sapiens (Human), this protein is Cleavage stimulation factor subunit 1 (CSTF1).